The chain runs to 116 residues: uncharacterized protein (116 aa).

The N-terminal stretch at 1-15 (MKKYFLILASFMLVA) is a signal peptide.

This is an uncharacterized protein from Haemophilus influenzae (strain ATCC 51907 / DSM 11121 / KW20 / Rd).